The primary structure comprises 84 residues: Large ribosomal subunit protein bL31B (84 aa).

The protein belongs to the bacterial ribosomal protein bL31 family. Type B subfamily. As to quaternary structure, part of the 50S ribosomal subunit.

The protein is Large ribosomal subunit protein bL31B of Acinetobacter baumannii (strain AB307-0294).